We begin with the raw amino-acid sequence, 467 residues long: Glycosyl hydrolase family 109 protein 1 (467 aa).

An N-terminal signal peptide occupies residues M1 to A22. NAD(+) is bound by residues M66–R67, D88, W137–H140, E157–V158, and N186. Residues Y215, R231, Y243–H246, and Y321 each bind substrate. NAD(+) is bound at residue Y243.

The protein belongs to the Gfo/Idh/MocA family. Glycosyl hydrolase 109 subfamily. It depends on NAD(+) as a cofactor.

Glycosidase. This Bacteroides thetaiotaomicron (strain ATCC 29148 / DSM 2079 / JCM 5827 / CCUG 10774 / NCTC 10582 / VPI-5482 / E50) protein is Glycosyl hydrolase family 109 protein 1.